Here is a 548-residue protein sequence, read N- to C-terminus: Isocitrate dehydrogenase [NAD(+)] 1, mitochondrial (548 aa).

Residues 1–53 (MSSLSTLRILHSTAGRRWASYYGIYPKSAACSSSSVAIARFFSTAADRPPKHA) constitute a mitochondrion transit peptide. NAD(+)-binding positions include 132 to 134 (TIT) and Asn-153. Residues 151–157 (SPNGAMR), Arg-187, Tyr-194, Lys-266, Asp-311, and Asp-335 contribute to the D-threo-isocitrate site. Positions 311, 335, and 339 each coordinate Mg(2+). NAD(+)-binding positions include 372-377 (HGTVSD) and Asn-391. One can recognise an EF-hand domain in the interval 499–534 (IDEEAINGLFQKYDKNGDGFIDFEEFTRMLVKMNLA). Ca(2+)-binding residues include Asp-512, Asn-514, Asp-516, Phe-518, and Glu-523.

The protein belongs to the isocitrate and isopropylmalate dehydrogenases family. Homodimer. It depends on Mg(2+) as a cofactor. Requires Mn(2+) as cofactor.

It localises to the mitochondrion. It catalyses the reaction D-threo-isocitrate + NAD(+) = 2-oxoglutarate + CO2 + NADH. The homodimer exhibits allosteric regulation by isocitrate. Activated by Mn(2+) and Mg(2+). No activation by Na(+), K(+) or Li(+). Inhibited by Co(2+), Cu(2+) and Ni(2+), but not with Ca(2+) in the presence of Mn(2+) or Mg(2+). Competitively inhibited by NADH, but no effect on activity by 1.0 mM citrate. Strongly inhibited by excess ATP, ADP, AMP and alpha-ketoglutarate. Functionally, performs an essential role in the oxidative function of the tricarboxylic acid cycle and respiration. Catalyzes the decarboxylation of isocitrate to produce 2-oxoglutarate and generate NADH to provide electrons for energy production. No activity with NADP(+). In Phaeodactylum tricornutum (strain CCAP 1055/1), this protein is Isocitrate dehydrogenase [NAD(+)] 1, mitochondrial.